A 558-amino-acid polypeptide reads, in one-letter code: MSNIEPSNVKPSNIELGTIPLAEAPATKLEAAYIAKKIAPNNSNPNAPVWVFVHGWGASANTWAPLVDELKSQCEIWLLDLPSFGGNTQAVNSPSAVAADIAKILPANTVLVGWSLGGMLLPLIAQQIEQHWPTKTISHCIGLAANAKFAQGDNYTAAMPAETFQTFCANFNVDPTTTWSRFGLLQAQGDSNRKLVSRQIKALHNAPMPEQFTAWQQALTWLGAIDNRVLLCEITTPFLHLFGEGDALVPADAAVAMAGINPLHQTLVVASAGHVLHFSQPAKIAQIMLARVHAKRNKARVAKSFSNAATEYDSVAYLQQKLANTLCEWVPEQAEKIADLGCGTGYCGLQLQRPERDIYSLDLAQGMLHTARSKALAKQQLFSGVCADIECLPFISNGFDALVSGMSMQWCEDLPAVFSEAHRVLKPNGEMIFSTLGPQTLFELREAWAEADIKLGRQGCVHVNTFIELDRVEIAAKQAGFVIEQTSREIHVLTYDSVMPLMRELKTIGAHNVNPGQEQGLTGKARLKAMAQAYEQFRTAQGVLPLTYEVGFYQLLKV.

The segment at 1–287 (MSNIEPSNVK…FSQPAKIAQI (287 aa)) is carboxylesterase. Residues tryptophan 56, 115 to 116 (SL), and 182 to 186 (FGLLQ) contribute to the substrate site. Serine 115 functions as the Nucleophile in the catalytic mechanism. Active-site residues include aspartate 246 and histidine 274. Histidine 274 contacts substrate. Positions 288-558 (MLARVHAKRN…EVGFYQLLKV (271 aa)) are malonyl-ACP O-methyltransferase.

In the N-terminal section; belongs to the AB hydrolase superfamily. Carboxylesterase BioH family. The protein in the C-terminal section; belongs to the methyltransferase superfamily.

It catalyses the reaction a carboxylic ester + H2O = an alcohol + a carboxylate + H(+). The enzyme catalyses malonyl-[ACP] + S-adenosyl-L-methionine = malonyl-[ACP] methyl ester + S-adenosyl-L-homocysteine. Its pathway is cofactor biosynthesis; biotin biosynthesis. In terms of biological role, converts the free carboxyl group of a malonyl-thioester to its methyl ester by transfer of a methyl group from S-adenosyl-L-methionine (SAM). It allows to synthesize pimeloyl-ACP via the fatty acid synthetic pathway. Its function is as follows. The physiological role of BioH is to remove the methyl group introduced by BioC when the pimeloyl moiety is complete. It allows to synthesize pimeloyl-ACP via the fatty acid synthetic pathway through the hydrolysis of the ester bonds of pimeloyl-ACP esters. In Saccharophagus degradans (strain 2-40 / ATCC 43961 / DSM 17024), this protein is Biotin biosynthesis bifunctional protein BioHC (bioC).